The following is a 213-amino-acid chain: uncharacterized protein (213 aa).

The chain crosses the membrane as a helical span at residues 22–42; that stretch reads WFGLSMVSIAVIFGPLTGAHV. The NPA 1 motif lies at 43–45; sequence NPA. 3 helical membrane passes run 63–83, 112–132, and 138–158; these read VYII…WLLF, NLLS…TLNH, and GVAM…FGGL. The NPA 2 motif lies at 164–166; sequence NPA. Residues 188-208 traverse the membrane as a helical segment; sequence FDYAWVPVLRPVIGAILAAWL.

Belongs to the MIP/aquaporin (TC 1.A.8) family.

It localises to the cell membrane. This is an uncharacterized protein from Haemophilus influenzae (strain ATCC 51907 / DSM 11121 / KW20 / Rd).